Reading from the N-terminus, the 638-residue chain is 1-deoxy-D-xylulose-5-phosphate synthase (638 aa).

Thiamine diphosphate contacts are provided by residues His-79 and 120–122 (GHS). Asp-151 contacts Mg(2+). Thiamine diphosphate-binding positions include 152–153 (GA), Asn-182, Tyr-291, and Glu-373. Asn-182 is a binding site for Mg(2+).

It belongs to the transketolase family. DXPS subfamily. Homodimer. The cofactor is Mg(2+). It depends on thiamine diphosphate as a cofactor.

It carries out the reaction D-glyceraldehyde 3-phosphate + pyruvate + H(+) = 1-deoxy-D-xylulose 5-phosphate + CO2. Its pathway is metabolic intermediate biosynthesis; 1-deoxy-D-xylulose 5-phosphate biosynthesis; 1-deoxy-D-xylulose 5-phosphate from D-glyceraldehyde 3-phosphate and pyruvate: step 1/1. In terms of biological role, catalyzes the acyloin condensation reaction between C atoms 2 and 3 of pyruvate and glyceraldehyde 3-phosphate to yield 1-deoxy-D-xylulose-5-phosphate (DXP). This chain is 1-deoxy-D-xylulose-5-phosphate synthase, found in Xanthomonas oryzae pv. oryzae (strain MAFF 311018).